The chain runs to 714 residues: Stellatatriene synthase (714 aa).

Residues M1 to D325 form a stellata-2,6,19-trien synthase region. Positions 92 and 96 each coordinate Mg(2+). The DDXXD motif 1 signature appears at D92–D96. Residues Y276–K284 carry the NSE motif motif. The tract at residues H326–T713 is geranylgeranyl diphosphate synthase. Residues K332–S356 are disordered. Positions S341–S356 are enriched in low complexity. Residues K434, R437, and H466 each coordinate isopentenyl diphosphate. The Mg(2+) site is built by D473 and D477. The short motif at D473 to D477 is the DDXXD motif 2 element. A dimethylallyl diphosphate-binding site is contributed by R482. R483 contacts isopentenyl diphosphate. Dimethylallyl diphosphate is bound by residues K560, T561, Q596, N603, K613, and K623.

This sequence in the N-terminal section; belongs to the terpene synthase family. In the C-terminal section; belongs to the FPP/GGPP synthase family. Hexamer.

It carries out the reaction 4 isopentenyl diphosphate + dimethylallyl diphosphate = (2E,6E,10E,14E)-geranylfarnesyl diphosphate + 4 diphosphate. The enzyme catalyses (2E,6E,10E,14E)-geranylfarnesyl diphosphate = stellata-2,6,19-triene + diphosphate. Its pathway is secondary metabolite biosynthesis; terpenoid biosynthesis. In terms of biological role, multifunctional diterpene synthase; part of the gene cluster that mediates the biosynthesis of the sesterterpene stellatic acid. The first step in the pathway is performed by the stellatatriene synthase that possesses both prenyl transferase and terpene cyclase activity, converting isopentenyl diphosphate and dimethylallyl diphosphate into geranylgeranyl diphosphate (GGDP) and then converting GGDP into stellata-2,6,19-triene. The cytochrome P450 monooxygenase Stl-P450 then catalyzes three successive oxidation reactions on the C-20 methyl group to generate the carboxylic acid of stellatic acid. The protein is Stellatatriene synthase of Emericella variicolor (Aspergillus stellatus).